The chain runs to 340 residues: UPF0284 protein Saci_0020 (340 aa).

The protein belongs to the UPF0284 family.

In Sulfolobus acidocaldarius (strain ATCC 33909 / DSM 639 / JCM 8929 / NBRC 15157 / NCIMB 11770), this protein is UPF0284 protein Saci_0020.